The primary structure comprises 227 residues: Esterase OVCA2 (227 aa).

Residues 44-68 (GPHPVPDPPGPEGARSDFGSCPPEE) form a disordered region. Active-site charge relay system residues include S119, D179, and H206.

The protein belongs to the LovG family. Proteolytically degraded in response to RA and 4HPR treatment in a time- and dose-dependent manner in the promyelocytic leukemia cell line HL-60. In terms of tissue distribution, ubiquitously expressed.

The enzyme catalyses a carboxylic ester + H2O = an alcohol + a carboxylate + H(+). Exhibits ester hydrolase activity with a strong preference for long-chain alkyl ester substrates and high selectivity against a variety of short, branched, and substituted esters. Is able to hydrolyze ester bonds within a wide range of p-nitrophenyl derivatives (C2-C14) in vitro, with a strong preference toward substrates of &gt;8 carbons. This Homo sapiens (Human) protein is Esterase OVCA2.